We begin with the raw amino-acid sequence, 258 residues long: MSSLFIAGHEFHSRLFTGTGKYASADAMMDSLTASESELVTLSLRRMDLKNQTDNILKPLQQQRIKLLPNTSGARTAKEAVFAAELAREALETNWVKLEIHPDPRYLMPDGMETLLAAEELIKKGFVVMPYVHADPVLCKRLEEVGCQCVMPLGSPIGSNMGLASRPFLEIIIEQSTVPVIIDAGIGAPSDAALALEIGADAVLVNTAMAVARQPAKMGKAFRLAVEAGRMAYESGLGERRVQAQATSPLTDFLGALS.

The Schiff-base intermediate with DXP role is filled by Lys97. Residues Gly158, 184 to 185 (AG), and 206 to 207 (NT) each bind 1-deoxy-D-xylulose 5-phosphate.

Belongs to the ThiG family. In terms of assembly, homotetramer. Forms heterodimers with either ThiH or ThiS.

Its subcellular location is the cytoplasm. It catalyses the reaction [ThiS sulfur-carrier protein]-C-terminal-Gly-aminoethanethioate + 2-iminoacetate + 1-deoxy-D-xylulose 5-phosphate = [ThiS sulfur-carrier protein]-C-terminal Gly-Gly + 2-[(2R,5Z)-2-carboxy-4-methylthiazol-5(2H)-ylidene]ethyl phosphate + 2 H2O + H(+). It functions in the pathway cofactor biosynthesis; thiamine diphosphate biosynthesis. Its function is as follows. Catalyzes the rearrangement of 1-deoxy-D-xylulose 5-phosphate (DXP) to produce the thiazole phosphate moiety of thiamine. Sulfur is provided by the thiocarboxylate moiety of the carrier protein ThiS. In vitro, sulfur can be provided by H(2)S. The chain is Thiazole synthase from Marinomonas sp. (strain MWYL1).